A 317-amino-acid polypeptide reads, in one-letter code: Apolipoprotein E (317 aa).

A signal peptide spans 1-18; the sequence is MKVLWAALLVTFLAGCQA. A run of 8 repeats spans residues 80–101, 102–123, 124–145, 146–167, 168–189, 190–211, 212–233, and 234–255. The segment at 80 to 255 is 8 X 22 AA approximate tandem repeats; sequence TLMDETMKEL…RLDEVKEQVA (176 aa). A Methionine sulfoxide modification is found at methionine 143. Residue serine 147 is modified to Phosphoserine. The segment at 158-168 is LDL and other lipoprotein receptors binding; that stretch reads HLRKLRKRLLR. 162-165 is a heparin binding site; sequence LRKR. Residues 210–290 form a lipid-binding and lipoprotein association region; sequence AATVGSLASQ…SWFEPLVEDM (81 aa). 229 to 236 is a heparin binding site; it reads GERLRARM. The segment at 266-317 is homooligomerization; it reads QQISLQAEAFQARLKSWFEPLVEDMQRQWAGLVEKVQAAVGASTAPVPSDNH. Positions 278–290 are specificity for association with VLDL; sequence RLKSWFEPLVEDM.

The protein belongs to the apolipoprotein A1/A4/E family. As to quaternary structure, homotetramer. May interact with ABCA1; functionally associated with ABCA1 in the biogenesis of HDLs. May interact with APP/A4 amyloid-beta peptide; the interaction is extremely stable in vitro but its physiological significance is unclear. May interact with MAPT. May interact with MAP2. In the cerebrospinal fluid, interacts with secreted SORL1. Interacts with PMEL; this allows the loading of PMEL luminal fragment on ILVs to induce fibril nucleation. Post-translationally, APOE exists as multiple glycosylated and sialylated glycoforms within cells and in plasma. The extent of glycosylation and sialylation are tissue and context specific. In terms of processing, glycated in plasma VLDL. Phosphorylated by FAM20C in the extracellular medium.

It localises to the secreted. Its subcellular location is the extracellular space. The protein localises to the extracellular matrix. It is found in the extracellular vesicle. The protein resides in the endosome. It localises to the multivesicular body. APOE is an apolipoprotein, a protein associating with lipid particles, that mainly functions in lipoprotein-mediated lipid transport between organs via the plasma and interstitial fluids. APOE is a core component of plasma lipoproteins and is involved in their production, conversion and clearance. Apolipoproteins are amphipathic molecules that interact both with lipids of the lipoprotein particle core and the aqueous environment of the plasma. As such, APOE associates with chylomicrons, chylomicron remnants, very low density lipoproteins (VLDL) and intermediate density lipoproteins (IDL) but shows a preferential binding to high-density lipoproteins (HDL). It also binds a wide range of cellular receptors including the LDL receptor/LDLR, the LDL receptor-related proteins LRP1, LRP2 and LRP8 and the very low-density lipoprotein receptor/VLDLR that mediate the cellular uptake of the APOE-containing lipoprotein particles. Finally, APOE also has a heparin-binding activity and binds heparan-sulfate proteoglycans on the surface of cells, a property that supports the capture and the receptor-mediated uptake of APOE-containing lipoproteins by cells. A main function of APOE is to mediate lipoprotein clearance through the uptake of chylomicrons, VLDLs, and HDLs by hepatocytes. APOE is also involved in the biosynthesis by the liver of VLDLs as well as their uptake by peripheral tissues ensuring the delivery of triglycerides and energy storage in muscle, heart and adipose tissues. By participating in the lipoprotein-mediated distribution of lipids among tissues, APOE plays a critical role in plasma and tissues lipid homeostasis. APOE is also involved in two steps of reverse cholesterol transport, the HDLs-mediated transport of cholesterol from peripheral tissues to the liver, and thereby plays an important role in cholesterol homeostasis. First, it is functionally associated with ABCA1 in the biogenesis of HDLs in tissues. Second, it is enriched in circulating HDLs and mediates their uptake by hepatocytes. APOE also plays an important role in lipid transport in the central nervous system, regulating neuron survival and sprouting. This chain is Apolipoprotein E (APOE), found in Theropithecus gelada (Gelada baboon).